The primary structure comprises 152 residues: Sec-independent protein translocase protein TatB (152 aa).

The chain crosses the membrane as a helical span at residues 1–21; the sequence is MFGISFSELLLVGLVALLVLG. The segment covering 98–115 has biased composition (low complexity); the sequence is HAPGAATVAEAPPASEVP. The segment at 98-152 is disordered; the sequence is HAPGAATVAEAPPASEVPAPLPSTPAPAPTAEPAAPVATPATTAPHDSTLPPRAP. A compositionally biased stretch (pro residues) spans 116 to 127; sequence APLPSTPAPAPT. The segment covering 128–142 has biased composition (low complexity); sequence AEPAAPVATPATTAP.

It belongs to the TatB family. As to quaternary structure, the Tat system comprises two distinct complexes: a TatABC complex, containing multiple copies of TatA, TatB and TatC subunits, and a separate TatA complex, containing only TatA subunits. Substrates initially bind to the TatABC complex, which probably triggers association of the separate TatA complex to form the active translocon.

Its subcellular location is the cell inner membrane. Part of the twin-arginine translocation (Tat) system that transports large folded proteins containing a characteristic twin-arginine motif in their signal peptide across membranes. Together with TatC, TatB is part of a receptor directly interacting with Tat signal peptides. TatB may form an oligomeric binding site that transiently accommodates folded Tat precursor proteins before their translocation. This is Sec-independent protein translocase protein TatB from Pseudomonas fluorescens (strain ATCC BAA-477 / NRRL B-23932 / Pf-5).